The following is a 734-amino-acid chain: Photosystem I P700 chlorophyll a apoprotein A2 (734 aa).

8 helical membrane passes run 46–69 (IFAS…FHVA), 135–158 (LYTG…FHLQ), 175–199 (LDHH…HVAI), 273–291 (IAHH…GHMY), 330–353 (LHFQ…QHMY), 369–395 (AALY…IFFI), 417–439 (AIIS…LYVH), and 517–535 (FLVH…LILV). [4Fe-4S] cluster contacts are provided by C559 and C568. Helical transmembrane passes span 575 to 596 (AFYL…YWHW) and 643 to 665 (LSVW…MFLI). 3 residues coordinate chlorophyll a: H654, M662, and Y670. Residue W671 participates in phylloquinone binding. Residues 707-727 (LVGLAHFSVGYIFTYAAFLIA) form a helical membrane-spanning segment.

Belongs to the PsaA/PsaB family. The PsaA/B heterodimer binds the P700 chlorophyll special pair and subsequent electron acceptors. PSI consists of a core antenna complex that captures photons, and an electron transfer chain that converts photonic excitation into a charge separation. The eukaryotic PSI reaction center is composed of at least 11 subunits. Requires P700 is a chlorophyll a/chlorophyll a' dimer, A0 is one or more chlorophyll a, A1 is one or both phylloquinones and FX is a shared 4Fe-4S iron-sulfur center. as cofactor.

The protein resides in the plastid. It localises to the chloroplast thylakoid membrane. It catalyses the reaction reduced [plastocyanin] + hnu + oxidized [2Fe-2S]-[ferredoxin] = oxidized [plastocyanin] + reduced [2Fe-2S]-[ferredoxin]. In terms of biological role, psaA and PsaB bind P700, the primary electron donor of photosystem I (PSI), as well as the electron acceptors A0, A1 and FX. PSI is a plastocyanin-ferredoxin oxidoreductase, converting photonic excitation into a charge separation, which transfers an electron from the donor P700 chlorophyll pair to the spectroscopically characterized acceptors A0, A1, FX, FA and FB in turn. Oxidized P700 is reduced on the lumenal side of the thylakoid membrane by plastocyanin. In Cycas taitungensis (Prince sago), this protein is Photosystem I P700 chlorophyll a apoprotein A2.